A 151-amino-acid chain; its full sequence is UPF0178 protein YaiI (151 aa).

Belongs to the UPF0178 family.

This is UPF0178 protein YaiI from Salmonella choleraesuis (strain SC-B67).